The sequence spans 171 residues: Tetratricopeptide repeat protein 9C (171 aa).

TPR repeat units follow at residues 8 to 41 (AQLY…LRGL), 72 to 107 (TDCY…QPDN), and 108 to 141 (AKAL…KPKD).

The protein belongs to the TTC9 family.

This Bos taurus (Bovine) protein is Tetratricopeptide repeat protein 9C (TTC9C).